We begin with the raw amino-acid sequence, 156 residues long: AP-1 complex subunit sigma-1 (156 aa).

The protein belongs to the adaptor complexes small subunit family. In terms of assembly, adaptor protein complex 1 (AP-1) is a heterotetramer composed of two large adaptins (gamma-type subunit and beta-type subunit), a medium adaptin (mu-type subunit) and a small adaptin (sigma-type subunit).

The protein localises to the golgi apparatus. It localises to the trans-Golgi network. The protein resides in the cytoplasmic vesicle. Its subcellular location is the clathrin-coated vesicle membrane. Functionally, subunit of clathrin-associated adaptor protein complex 1 that plays a role in protein sorting in the trans-Golgi network (TGN) and endosomes. The AP complexes mediate the recruitment of clathrin to membranes and the recognition of sorting signals within the cytosolic tails of transmembrane cargo molecules. Also involved in early steps of phagocytosis and macropinocytosis. This Dictyostelium discoideum (Social amoeba) protein is AP-1 complex subunit sigma-1 (ap1s1).